The following is a 517-amino-acid chain: GMP synthase [glutamine-hydrolyzing] (517 aa).

The Glutamine amidotransferase type-1 domain maps to 11-202; that stretch reads KIIVLDFGSQ…AFNVCDAKAN (192 aa). Cys88 functions as the Nucleophile in the catalytic mechanism. Residues His176 and Glu178 contribute to the active site. One can recognise a GMPS ATP-PPase domain in the interval 203 to 392; it reads WTMDDFIEMQ…LGIPHDLVWR (190 aa). 230 to 236 is a binding site for ATP; it reads SGGVDSS.

In terms of assembly, homodimer.

The catalysed reaction is XMP + L-glutamine + ATP + H2O = GMP + L-glutamate + AMP + diphosphate + 2 H(+). The protein operates within purine metabolism; GMP biosynthesis; GMP from XMP (L-Gln route): step 1/1. Its function is as follows. Catalyzes the synthesis of GMP from XMP. This chain is GMP synthase [glutamine-hydrolyzing], found in Lactobacillus gasseri (strain ATCC 33323 / DSM 20243 / BCRC 14619 / CIP 102991 / JCM 1131 / KCTC 3163 / NCIMB 11718 / NCTC 13722 / AM63).